We begin with the raw amino-acid sequence, 192 residues long: Crossover junction endodeoxyribonuclease RuvC (192 aa).

Catalysis depends on residues aspartate 20, glutamate 80, and aspartate 153. Mg(2+) contacts are provided by aspartate 20, glutamate 80, and aspartate 153.

It belongs to the RuvC family. As to quaternary structure, homodimer which binds Holliday junction (HJ) DNA. The HJ becomes 2-fold symmetrical on binding to RuvC with unstacked arms; it has a different conformation from HJ DNA in complex with RuvA. In the full resolvosome a probable DNA-RuvA(4)-RuvB(12)-RuvC(2) complex forms which resolves the HJ. The cofactor is Mg(2+).

Its subcellular location is the cytoplasm. It carries out the reaction Endonucleolytic cleavage at a junction such as a reciprocal single-stranded crossover between two homologous DNA duplexes (Holliday junction).. The RuvA-RuvB-RuvC complex processes Holliday junction (HJ) DNA during genetic recombination and DNA repair. Endonuclease that resolves HJ intermediates. Cleaves cruciform DNA by making single-stranded nicks across the HJ at symmetrical positions within the homologous arms, yielding a 5'-phosphate and a 3'-hydroxyl group; requires a central core of homology in the junction. The consensus cleavage sequence is 5'-(A/T)TT(C/G)-3'. Cleavage occurs on the 3'-side of the TT dinucleotide at the point of strand exchange. HJ branch migration catalyzed by RuvA-RuvB allows RuvC to scan DNA until it finds its consensus sequence, where it cleaves and resolves the cruciform DNA. The protein is Crossover junction endodeoxyribonuclease RuvC of Christiangramia forsetii (strain DSM 17595 / CGMCC 1.15422 / KT0803) (Gramella forsetii).